The primary structure comprises 314 residues: Methionyl-tRNA formyltransferase (314 aa).

Residue 112 to 115 participates in (6S)-5,6,7,8-tetrahydrofolate binding; the sequence is SLLP.

It belongs to the Fmt family.

It catalyses the reaction L-methionyl-tRNA(fMet) + (6R)-10-formyltetrahydrofolate = N-formyl-L-methionyl-tRNA(fMet) + (6S)-5,6,7,8-tetrahydrofolate + H(+). Attaches a formyl group to the free amino group of methionyl-tRNA(fMet). The formyl group appears to play a dual role in the initiator identity of N-formylmethionyl-tRNA by promoting its recognition by IF2 and preventing the misappropriation of this tRNA by the elongation apparatus. This is Methionyl-tRNA formyltransferase from Tolumonas auensis (strain DSM 9187 / NBRC 110442 / TA 4).